A 242-amino-acid chain; its full sequence is ATP synthase subunit a (242 aa).

6 helical membrane-spanning segments follow: residues 29-49, 83-103, 114-134, 140-160, 181-201, and 206-226; these read SAVA…IAFV, VFFP…IIGM, IIVT…YGIY, FFSL…MVII, VAGH…TWFF, and IALV…QAYI.

Belongs to the ATPase A chain family. In terms of assembly, F-type ATPases have 2 components, CF(1) - the catalytic core - and CF(0) - the membrane proton channel. CF(1) has five subunits: alpha(3), beta(3), gamma(1), delta(1), epsilon(1). CF(0) has three main subunits: a(1), b(2) and c(9-12). The alpha and beta chains form an alternating ring which encloses part of the gamma chain. CF(1) is attached to CF(0) by a central stalk formed by the gamma and epsilon chains, while a peripheral stalk is formed by the delta and b chains.

It is found in the cell inner membrane. Its function is as follows. Key component of the proton channel; it plays a direct role in the translocation of protons across the membrane. The chain is ATP synthase subunit a from Orientia tsutsugamushi (strain Boryong) (Rickettsia tsutsugamushi).